The chain runs to 124 residues: Glycine cleavage system H protein (124 aa).

The region spanning 22–104 (TATVGITDFA…YGDGWMIEIE (83 aa)) is the Lipoyl-binding domain. N6-lipoyllysine is present on lysine 63.

It belongs to the GcvH family. The glycine cleavage system is composed of four proteins: P, T, L and H. Requires (R)-lipoate as cofactor.

Its function is as follows. The glycine cleavage system catalyzes the degradation of glycine. The H protein shuttles the methylamine group of glycine from the P protein to the T protein. The chain is Glycine cleavage system H protein from Salinibacter ruber (strain DSM 13855 / M31).